The sequence spans 272 residues: MRKLIEGLRHFRTSYYPSHRDLFEQFAKGQHPRVLFITCSDSRIDPNLITQSGMGELFVIRNAGNLIPPFGAANGGEGASIEYAIAALNIEHVVVCGHSHCGAMKGLLKLNQLQEDMPLVYDWLQHAQATRRLVLDNYSGYETDDLVEILVAENVLTQIENLKTYPIVRSRLFQGKLQIFGWIYEVESGEVLQISRTSSDDTGIDECPVRLPGSQEKAILGRCVVPLTEEVAVAPPEPEPVIAAVAAPPANYSSRGWLAPEQQQRIYRGNAS.

Zn(2+) contacts are provided by C39, H98, and C101.

Belongs to the beta-class carbonic anhydrase family. In terms of assembly, a hexamer formed by a trimer of dimers. Purified from carboxysomes with the both RuBisCO subunits and the full-length form of CcmM, probably interacts with the N-terminus of CcmM. Zn(2+) serves as cofactor.

It is found in the carboxysome. The enzyme catalyses hydrogencarbonate + H(+) = CO2 + H2O. Functionally, reversible hydration of carbon dioxide. Essential to photosynthetic carbon dioxide fixation, supplies CO(2) to RuBisCO (ribulose bisphosphate carboxylase, rbcL-rbcS) in the carboxysome. Loss of activity results in limitation of CO(2) availability to RuBisCO located in the cytoplasm. This chain is Carbonic anhydrase, found in Synechococcus elongatus (strain ATCC 33912 / PCC 7942 / FACHB-805) (Anacystis nidulans R2).